Reading from the N-terminus, the 384-residue chain is Urea transporter 1 (384 aa).

Glu39 carries the phosphoserine modification. 5 consecutive transmembrane segments (helical) span residues 61–81 (ISQVVFVSNPISGILILVGLL), 85–105 (PWWALCGCVGTVVSTLTALLL), 111–131 (AIAAGLQGYNATLVGILMAVF), 138–158 (FWWLIFPVSAMSMTCPVFSSA), and 168–188 (LPVFTLPFNMALSMYLSATGH). Asn206 carries N-linked (GlcNAc...) asparagine glycosylation. 4 helical membrane-spanning segments follow: residues 250–270 (LMCLHAAIGSLLGVIAGLSLA), 276–296 (IYFGLWGFNSSLACIAIGGMF), 305–325 (LLALACALFTAYFGACMAHLM), and 327–347 (VVHLPACTWSFCLATLLFLLL).

Belongs to the urea transporter family. Homotrimer; each subunit contains a pore through which urea permeates. Identified in a complex with STOM. In terms of processing, N-glycosylated in red blood cells, as well as in most non-erythroid tissues, except in the gastrocnemius muscle and in the gastrointestinal tract, including liver, colon and stomach. As to expression, expressed in brain, kidney, heart, liver, lung, skeletal muscle, spleen, testis, ureter and urinary bladder (at protein level). Along the gastrointestinal tract, detected in colon, jejunum and stomach (at protein level). In the kidney, expressed in some microvessels of the inner and outer medulla, but not all (at protein level). Not detected in the cortex (at protein level). Detected in the urothelium all along the urinary tract, including the papilla surface, the ureter, the bladder and the urethra (at protein level). In the brain, expressed at the border of the corpus callosum and striatum in astrocytic cellular processes surrounding blood microvessels (at protein level). Detected in erythrocytes (at protein level).

The protein resides in the cell membrane. Its subcellular location is the basolateral cell membrane. The enzyme catalyses urea(in) = urea(out). Its function is as follows. Mediates the transport of urea driven by a concentration gradient across the cell membranes of erythrocytes and the renal inner medullary collecting duct which is critical to the urinary concentrating mechanism. Facilitates water transport in erythrocytes. The sequence is that of Urea transporter 1 (Slc14a1) from Mus musculus (Mouse).